Consider the following 108-residue polypeptide: U3-lycotoxin-Ls1w (108 aa).

The first 20 residues, 1–20, serve as a signal peptide directing secretion; the sequence is MKFVLLFGVLLVTLFSYSSA. Positions 21–44 are excised as a propeptide; sequence EMLDDFDQADEDELLSLIEKEEAR. Disulfide bonds link C48-C63, C55-C72, C62-C87, and C74-C85.

This sequence belongs to the neurotoxin 19 (CSTX) family. 01 subfamily. As to expression, expressed by the venom gland.

Its subcellular location is the secreted. The protein is U3-lycotoxin-Ls1w of Lycosa singoriensis (Wolf spider).